The sequence spans 209 residues: Claudin-like protein ZF-A9 (209 aa).

Helical transmembrane passes span 8 to 28 (LGTTLGTLGWLGIIISCAIPL), 81 to 101 (AILVISAIVGLIAMFASFAGG), 114 to 134 (ALVATTGGVAFIIAGILGLVP), and 159 to 179 (FGAAIFICWGAAVLLVIGGGL). Residues 187–209 (GRTSSRGRYTPASQNGRERSEYV) form a disordered region. Over residues 188-201 (RTSSRGRYTPASQN) the composition is skewed to polar residues.

The protein belongs to the claudin family.

The protein resides in the cell membrane. The protein localises to the cell junction. It is found in the tight junction. Functionally, component of tight junction (TJ) strands. The sequence is that of Claudin-like protein ZF-A9 (cldng) from Danio rerio (Zebrafish).